Here is a 142-residue protein sequence, read N- to C-terminus: MTTFTAKSETVQRDWYLVDAAGKTLGRLSTELARRLRGKHKPVYTPHVDTGDYLVVINAEKIVVTGNKLKDKKYHRFTGYIGNLKTESLEQALQRHPERVIEIAVKGMLPKGPLGRTMYRKLKVYSGAEHPHAAQQPQVLDI.

Belongs to the universal ribosomal protein uL13 family. As to quaternary structure, part of the 50S ribosomal subunit.

Functionally, this protein is one of the early assembly proteins of the 50S ribosomal subunit, although it is not seen to bind rRNA by itself. It is important during the early stages of 50S assembly. In Xanthomonas campestris pv. campestris (strain ATCC 33913 / DSM 3586 / NCPPB 528 / LMG 568 / P 25), this protein is Large ribosomal subunit protein uL13.